The chain runs to 683 residues: DNA ligase (683 aa).

NAD(+) contacts are provided by residues 36–40 (DAVYD), 85–86 (SL), and Glu121. Catalysis depends on Lys123, which acts as the N6-AMP-lysine intermediate. NAD(+) is bound by residues Arg144, Glu180, Lys296, and Lys320. Cys413, Cys416, Cys431, and Cys437 together coordinate Zn(2+). The 79-residue stretch at 605–683 (PSEGHLSGKV…ESGWRVLAGL (79 aa)) folds into the BRCT domain.

The protein belongs to the NAD-dependent DNA ligase family. LigA subfamily. Mg(2+) is required as a cofactor. It depends on Mn(2+) as a cofactor.

It carries out the reaction NAD(+) + (deoxyribonucleotide)n-3'-hydroxyl + 5'-phospho-(deoxyribonucleotide)m = (deoxyribonucleotide)n+m + AMP + beta-nicotinamide D-nucleotide.. DNA ligase that catalyzes the formation of phosphodiester linkages between 5'-phosphoryl and 3'-hydroxyl groups in double-stranded DNA using NAD as a coenzyme and as the energy source for the reaction. It is essential for DNA replication and repair of damaged DNA. The sequence is that of DNA ligase from Gluconobacter oxydans (strain 621H) (Gluconobacter suboxydans).